Reading from the N-terminus, the 366-residue chain is 2-aminoethylphosphonate--pyruvate transaminase (366 aa).

An N6-(pyridoxal phosphate)lysine modification is found at K192.

The protein belongs to the class-V pyridoxal-phosphate-dependent aminotransferase family. PhnW subfamily. In terms of assembly, homodimer. Pyridoxal 5'-phosphate serves as cofactor.

It catalyses the reaction (2-aminoethyl)phosphonate + pyruvate = phosphonoacetaldehyde + L-alanine. Involved in phosphonate degradation. The polypeptide is 2-aminoethylphosphonate--pyruvate transaminase (phnW) (Lysinibacillus sphaericus (strain C3-41)).